A 271-amino-acid chain; its full sequence is MSVVSLLGVNVMNNPAKFTDKYLFEITFECLEHLEKDLEWKLTYVGSATSDNYDQELDSLLVGPIPVGVNKFIFEAEPPDTKRIPIDELLGVTVILLTCAYDGREFVRVGYYVNNEYESEELINDPPPKPVIEKIRRNVLAEKPRVTRFAIKWDSEASAPPEFPPEQPEADEVADEEEYGADELAEQSSIADPAVNGGMEVEGQPNGAIVIEEDEMSEDGSVDLENESEDELDGEGDAEGELEQGQDEDIEMGDEMEIDDHPKQQGMAMAQ.

The tract at residues 152–271 is disordered; it reads KWDSEASAPP…PKQQGMAMAQ (120 aa). Acidic residues-rich tracts occupy residues 168-185 and 211-258; these read PEADEVADEEEYGADELA and IEED…EMEI.

This sequence belongs to the ASF1 family. In terms of assembly, interacts with histone H3 and histone H4.

The protein localises to the nucleus. Functionally, histone chaperone that facilitates histone deposition and histone exchange and removal during nucleosome assembly and disassembly. This chain is Histone chaperone asf-1 (asf-1), found in Neurospora crassa (strain ATCC 24698 / 74-OR23-1A / CBS 708.71 / DSM 1257 / FGSC 987).